The following is a 312-amino-acid chain: GTP cyclohydrolase MptA (312 aa).

This sequence belongs to the GTP cyclohydrolase IV family. As to quaternary structure, homodimer. Requires Fe(2+) as cofactor.

The catalysed reaction is GTP + H2O = 7,8-dihydroneopterin 2',3'-cyclic phosphate + formate + diphosphate + H(+). The protein operates within cofactor biosynthesis; 5,6,7,8-tetrahydromethanopterin biosynthesis. In terms of biological role, converts GTP to 7,8-dihydro-D-neopterin 2',3'-cyclic phosphate, the first intermediate in the biosynthesis of coenzyme methanopterin. This chain is GTP cyclohydrolase MptA, found in Methanococcus vannielii (strain ATCC 35089 / DSM 1224 / JCM 13029 / OCM 148 / SB).